Here is a 555-residue protein sequence, read N- to C-terminus: Urocanate hydratase (555 aa).

NAD(+) contacts are provided by residues 52–53 (GG), Q130, 176–178 (GMG), E196, R201, 242–243 (NA), 263–267 (QTSAH), 273–274 (YL), and Y322. C410 is a catalytic residue. G492 is a binding site for NAD(+).

This sequence belongs to the urocanase family. Requires NAD(+) as cofactor.

It localises to the cytoplasm. It carries out the reaction 4-imidazolone-5-propanoate = trans-urocanate + H2O. The protein operates within amino-acid degradation; L-histidine degradation into L-glutamate; N-formimidoyl-L-glutamate from L-histidine: step 2/3. Functionally, catalyzes the conversion of urocanate to 4-imidazolone-5-propionate. This is Urocanate hydratase from Shewanella baltica (strain OS185).